An 88-amino-acid polypeptide reads, in one-letter code: Co-chaperonin GroES (88 aa).

Belongs to the GroES chaperonin family. In terms of assembly, heptamer of 7 subunits arranged in a ring. Interacts with the chaperonin GroEL.

The protein resides in the cytoplasm. Together with the chaperonin GroEL, plays an essential role in assisting protein folding. The GroEL-GroES system forms a nano-cage that allows encapsulation of the non-native substrate proteins and provides a physical environment optimized to promote and accelerate protein folding. GroES binds to the apical surface of the GroEL ring, thereby capping the opening of the GroEL channel. This chain is Co-chaperonin GroES, found in Thermodesulfovibrio yellowstonii (strain ATCC 51303 / DSM 11347 / YP87).